A 623-amino-acid polypeptide reads, in one-letter code: Lethal(3)malignant brain tumor-like protein 4 (623 aa).

Residues 1 to 44 (MKQPNRKRKLNMDSKERLDQDGRLEQAEEEKKPKDSTTPLSHVP) form a disordered region. A compositionally biased stretch (basic and acidic residues) spans 10-35 (LNMDSKERLDQDGRLEQAEEEKKPKD). MBT repeat units lie at residues 52-152 (WSWE…LHIP), 160-260 (FVWM…LIAP), and 269-364 (FSWT…LEVP). A CCHHC-type zinc finger spans residues 370–414 (LKILPGQAVCPTPGCRGIGHIRGPRYSGHHSAFGCPYSDMNLKKE). Zn(2+)-binding residues include C379, C384, H398, and C404. One can recognise an SAM domain in the interval 543–607 (WTVDEVAEFV…YNSILMFRHS (65 aa)).

The protein localises to the nucleus. Putative Polycomb group (PcG) protein. PcG proteins maintain the transcriptionally repressive state of genes, probably via a modification of chromatin, rendering it heritably changed in its expressibility. This Homo sapiens (Human) protein is Lethal(3)malignant brain tumor-like protein 4 (L3MBTL4).